The following is a 200-amino-acid chain: Pyridoxal 5'-phosphate synthase subunit PdxT (200 aa).

Gly-52 to Ser-54 is an L-glutamine binding site. Cys-84 acts as the Nucleophile in catalysis. Residues Arg-116 and Ile-145–Arg-146 each bind L-glutamine. Active-site charge relay system residues include His-181 and Glu-183.

It belongs to the glutaminase PdxT/SNO family. As to quaternary structure, in the presence of PdxS, forms a dodecamer of heterodimers. Only shows activity in the heterodimer.

It catalyses the reaction aldehydo-D-ribose 5-phosphate + D-glyceraldehyde 3-phosphate + L-glutamine = pyridoxal 5'-phosphate + L-glutamate + phosphate + 3 H2O + H(+). The enzyme catalyses L-glutamine + H2O = L-glutamate + NH4(+). The protein operates within cofactor biosynthesis; pyridoxal 5'-phosphate biosynthesis. Functionally, catalyzes the hydrolysis of glutamine to glutamate and ammonia as part of the biosynthesis of pyridoxal 5'-phosphate. The resulting ammonia molecule is channeled to the active site of PdxS. The protein is Pyridoxal 5'-phosphate synthase subunit PdxT of Saccharolobus solfataricus (strain ATCC 35092 / DSM 1617 / JCM 11322 / P2) (Sulfolobus solfataricus).